The sequence spans 723 residues: Threonine--tRNA ligase 1, cytoplasmic (723 aa).

Polar residues predominate over residues 1-10; the sequence is MSEEQASSPS. Positions 1–49 are disordered; it reads MSEEQASSPSAKMGDEEKPVGAGEEKQKEGSKKKNKEGSGDGGRAELNP. The segment covering 13-39 has biased composition (basic and acidic residues); sequence MGDEEKPVGAGEEKQKEGSKKKNKEGS. S39 is modified (phosphoserine). Residues 79 to 143 form the TGS domain; the sequence is DSKPIKVTLP…EEDCTLELLK (65 aa). Position 243 is an N6-acetyllysine (K243). Phosphothreonine is present on T246. A Phosphotyrosine modification is found at Y298. T453 is subject to Phosphothreonine. At S702 the chain carries Phosphoserine.

The protein belongs to the class-II aminoacyl-tRNA synthetase family. In terms of assembly, homodimer. Post-translationally, ISGylated.

The protein localises to the cytoplasm. It carries out the reaction tRNA(Thr) + L-threonine + ATP = L-threonyl-tRNA(Thr) + AMP + diphosphate + H(+). Functionally, catalyzes the attachment of threonine to tRNA(Thr) in a two-step reaction: threonine is first activated by ATP to form Thr-AMP and then transferred to the acceptor end of tRNA(Thr). Also edits incorrectly charged tRNA(Thr) via its editing domain, at the post-transfer stage. In Bos taurus (Bovine), this protein is Threonine--tRNA ligase 1, cytoplasmic (TARS1).